The following is a 399-amino-acid chain: DJ-1 protein homolog F (399 aa).

PfpI endopeptidase domains lie at 7–199 (KSVL…ESLG) and 211–394 (TSLL…TALG).

The protein belongs to the peptidase C56 family. Homotrimer.

In terms of biological role, may be involved in oxidative stress response. In Arabidopsis thaliana (Mouse-ear cress), this protein is DJ-1 protein homolog F (DJ1F).